The primary structure comprises 31 residues: Mu-conotoxin SmIIIA (31 aa).

The propeptide occupies 1–6 (PLFDKR). Position 7 is a pyrrolidone carboxylic acid (Q7). Disulfide bonds link C9–C21, C10–C27, and C16–C28. A Cysteine amide modification is found at C28.

This sequence belongs to the conotoxin M superfamily. Post-translationally, smIIIA' is a putative isoform where the N-terminal AA is missing. As to expression, expressed by the venom duct.

The protein localises to the secreted. Its function is as follows. Mu-conotoxins block voltage-gated sodium channels (Nav). This toxin blocks rNav1.5/SCN5A (IC(50) is 1.3 uM), rNav1.6/SCN8A (IC(50) is 160 nM), rNav1.7/SCN9A (IC(50) is 1.3 uM), rNav1.1/SCN1A (K(d) is 3.8 nM), rNav1.2/SCN2A (K(d) is 1.3 nM), rNav1.4/SCN4A (K(d) is 0.22 nM), rNav1.6/SCN8A (K(d) is 69 nM), and rNav1.7/SCN9A (K(d) is 260 nM). This toxin is very potent but weakly discriminating among sodium channels. The block of these channels is modified when beta-subunits are coexpressed with alpha subunits. Hence, blocks of channels containing beta-1 and beta-3 subunits are more potent (compared to channels without beta subunits), whereas blocks of channels containing beta-2 and beta-4 subunits are less potent (compared to channels without beta subunits). The sequence is that of Mu-conotoxin SmIIIA from Conus stercusmuscarum (Fly-specked cone).